The following is a 436-amino-acid chain: UDP-glucuronate 4-epimerase 5 (436 aa).

The next 2 membrane-spanning stretches (helical) occupy residues 36–56 (LTLW…LSPP) and 95–115 (GLTV…SIAL). 97–128 (TVLVTGASGFVGTHVSIALRRRGDGVLGLDNF) provides a ligand contact to NAD(+). Catalysis depends on Tyr-247, which acts as the Proton acceptor.

The protein belongs to the NAD(P)-dependent epimerase/dehydratase family. In terms of assembly, homodimer. As to expression, in leaves, pollen and siliques, but not in roots or flowers.

The protein resides in the golgi apparatus. It is found in the golgi stack membrane. It catalyses the reaction UDP-alpha-D-glucuronate = UDP-alpha-D-galacturonate. Functionally, involved in the synthesis of the negatively charged monosaccharide that forms the backbone of pectic cell wall components. This Arabidopsis thaliana (Mouse-ear cress) protein is UDP-glucuronate 4-epimerase 5 (GAE5).